Consider the following 216-residue polypeptide: 3-isopropylmalate dehydratase small subunit (216 aa).

Belongs to the LeuD family. LeuD type 1 subfamily. As to quaternary structure, heterodimer of LeuC and LeuD.

The catalysed reaction is (2R,3S)-3-isopropylmalate = (2S)-2-isopropylmalate. Its pathway is amino-acid biosynthesis; L-leucine biosynthesis; L-leucine from 3-methyl-2-oxobutanoate: step 2/4. Catalyzes the isomerization between 2-isopropylmalate and 3-isopropylmalate, via the formation of 2-isopropylmaleate. This chain is 3-isopropylmalate dehydratase small subunit, found in Acinetobacter baylyi (strain ATCC 33305 / BD413 / ADP1).